Consider the following 173-residue polypeptide: RNA pyrophosphohydrolase (173 aa).

One can recognise a Nudix hydrolase domain in the interval 11 to 164; the sequence is PYRKCVGILV…KKHVYTQVVK (154 aa). Residues 52–73 carry the Nudix box motif; the sequence is GGINQGEKPIDAARRELYEETG.

The protein belongs to the Nudix hydrolase family. RppH subfamily. It depends on a divalent metal cation as a cofactor.

In terms of biological role, accelerates the degradation of transcripts by removing pyrophosphate from the 5'-end of triphosphorylated RNA, leading to a more labile monophosphorylated state that can stimulate subsequent ribonuclease cleavage. In Bartonella clarridgeiae, this protein is RNA pyrophosphohydrolase.